The chain runs to 1035 residues: Cell-division control histidine kinase PdhS (1035 aa).

The tract at residues 1–613 (MSGSYPFIDI…HADGSEEPVD (613 aa)) is important for polar localization. A disordered region spans residues 500–533 (QGLANTRAESETPVSETSSIEPVEPTPPVKTRSE). The interval 614 to 1035 (AHLNAIAWRG…VFPPTRVLAD (422 aa)) is interaction with DivK. The PAS domain maps to 659–730 (HVEELKTILD…YLHGLSGNGV (72 aa)). One can recognise a Histidine kinase domain in the interval 802–1031 (RISHEIRTPL…VVEIVFPPTR (230 aa)). His-805 carries the post-translational modification Phosphohistidine; by autocatalysis.

Interacts with DivK.

The protein localises to the cytoplasm. The catalysed reaction is ATP + protein L-histidine = ADP + protein N-phospho-L-histidine.. Functions as a polar differentiation marker. Essential protein that, by localizing in the old pole of dividing cells, controls cell division and maturation, probably through control of DivK phosphorylation status and cellular distribution, which in turn regulates CtrA, a transcriptional regulator of the minB operon. The asymmetrical localization of this protein is probably required for cells to enter a new division cycle. This Brucella abortus (strain S19) protein is Cell-division control histidine kinase PdhS (pdhS).